The following is a 243-amino-acid chain: Carboxy-S-adenosyl-L-methionine synthase (243 aa).

S-adenosyl-L-methionine contacts are provided by residues Tyr39, 64–66, 89–90, 117–118, Asn132, and Arg199; these read GCS, DN, and DL.

The protein belongs to the class I-like SAM-binding methyltransferase superfamily. Cx-SAM synthase family. Homodimer.

The catalysed reaction is prephenate + S-adenosyl-L-methionine = carboxy-S-adenosyl-L-methionine + 3-phenylpyruvate + H2O. Its function is as follows. Catalyzes the conversion of S-adenosyl-L-methionine (SAM) to carboxy-S-adenosyl-L-methionine (Cx-SAM). In Pseudoalteromonas atlantica (strain T6c / ATCC BAA-1087), this protein is Carboxy-S-adenosyl-L-methionine synthase.